A 362-amino-acid chain; its full sequence is Chorismate synthase (362 aa).

R47 contributes to the NADP(+) binding site. FMN contacts are provided by residues 124-126, G286, 301-305, and R327; these read RSS and KPTAT.

It belongs to the chorismate synthase family. Homotetramer. FMNH2 is required as a cofactor.

The catalysed reaction is 5-O-(1-carboxyvinyl)-3-phosphoshikimate = chorismate + phosphate. The protein operates within metabolic intermediate biosynthesis; chorismate biosynthesis; chorismate from D-erythrose 4-phosphate and phosphoenolpyruvate: step 7/7. In terms of biological role, catalyzes the anti-1,4-elimination of the C-3 phosphate and the C-6 proR hydrogen from 5-enolpyruvylshikimate-3-phosphate (EPSP) to yield chorismate, which is the branch point compound that serves as the starting substrate for the three terminal pathways of aromatic amino acid biosynthesis. This reaction introduces a second double bond into the aromatic ring system. The sequence is that of Chorismate synthase from Synechococcus elongatus (strain ATCC 33912 / PCC 7942 / FACHB-805) (Anacystis nidulans R2).